The chain runs to 86 residues: Putative defensin-like protein 244 (86 aa).

The signal sequence occupies residues 1–22 (MKGIAMLLVSCLLFSFLSTNLA). Intrachain disulfides connect Cys-28/Cys-83, Cys-38/Cys-67, Cys-48/Cys-77, and Cys-65/Cys-79.

This sequence belongs to the DEFL family.

It is found in the secreted. In Arabidopsis thaliana (Mouse-ear cress), this protein is Putative defensin-like protein 244 (SCRL11).